The following is a 90-amino-acid chain: Large ribosomal subunit protein bL27 (90 aa).

Residues 1–22 (MAHKKAGGSSRNGRDSESKRLG) are disordered.

Belongs to the bacterial ribosomal protein bL27 family.

The polypeptide is Large ribosomal subunit protein bL27 (Allorhizobium ampelinum (strain ATCC BAA-846 / DSM 112012 / S4) (Agrobacterium vitis (strain S4))).